Reading from the N-terminus, the 463-residue chain is tRNA (guanine(10)-N(2))-methyltransferase TRMT11 (463 aa).

An N-acetylalanine modification is found at Ala2.

The protein belongs to the class I-like SAM-binding methyltransferase superfamily. TRM11 methyltransferase family. In terms of assembly, part of the heterodimeric TRMT11-TRM112 methyltransferase complex; this complex forms an active tRNA methyltransferase, where TRMT112 acts as an activator of the catalytic subunit TRMT11.

The protein localises to the cytoplasm. It carries out the reaction guanosine(10) in tRNA + S-adenosyl-L-methionine = N(2)-methylguanosine(10) in tRNA + S-adenosyl-L-homocysteine + H(+). Catalytic subunit of the TRMT11-TRM112 methyltransferase complex, that specifically mediates the S-adenosyl-L-methionine-dependent N(2)-methylation of guanosine nucleotide at position 10 (m2G10) in tRNAs. This is one of the major tRNA (guanine-N(2))-methyltransferases. This Rattus norvegicus (Rat) protein is tRNA (guanine(10)-N(2))-methyltransferase TRMT11.